The following is a 565-amino-acid chain: Sulfite reductase [NADPH] hemoprotein beta-component (565 aa).

[4Fe-4S] cluster contacts are provided by cysteine 429, cysteine 435, cysteine 474, and cysteine 478. Cysteine 478 provides a ligand contact to siroheme.

Belongs to the nitrite and sulfite reductase 4Fe-4S domain family. As to quaternary structure, alpha(8)-beta(8). The alpha component is a flavoprotein, the beta component is a hemoprotein. The cofactor is siroheme. [4Fe-4S] cluster is required as a cofactor.

The enzyme catalyses hydrogen sulfide + 3 NADP(+) + 3 H2O = sulfite + 3 NADPH + 4 H(+). It functions in the pathway sulfur metabolism; hydrogen sulfide biosynthesis; hydrogen sulfide from sulfite (NADPH route): step 1/1. Its function is as follows. Component of the sulfite reductase complex that catalyzes the 6-electron reduction of sulfite to sulfide. This is one of several activities required for the biosynthesis of L-cysteine from sulfate. The chain is Sulfite reductase [NADPH] hemoprotein beta-component from Shewanella halifaxensis (strain HAW-EB4).